We begin with the raw amino-acid sequence, 293 residues long: Tumor necrosis factor receptor superfamily member 13B (293 aa).

Over 1–165 (MSGLGRSRRG…SADQVALVYS (165 aa)) the chain is Extracellular. TNFR-Cys repeat units lie at residues 33 to 67 (SCPEEQYWDPLLGTCMSCKTICNHQSQRTCAAFCR) and 70 to 104 (SCRKEQGKFYDHLLRDCISCASICGQHPKQCAYFC). 6 disulfides stabilise this stretch: Cys34-Cys47, Cys50-Cys62, Cys54-Cys66, Cys71-Cys86, Cys89-Cys100, and Cys93-Cys104. The tract at residues 115 to 146 (PPELRRQRSGEVENNSDNSGRYQGLEHRGSEA) is disordered. The segment covering 126–135 (VENNSDNSGR) has biased composition (polar residues). N-linked (GlcNAc...) asparagine glycosylation occurs at Asn128. Residues 166 to 186 (TLGLCLCAVLCCFLVAVACFL) form a helical; Signal-anchor for type III membrane protein membrane-spanning segment. The Cytoplasmic portion of the chain corresponds to 187 to 293 (KKRGDPCSCQ…VPAQEGGPGA (107 aa)). Positions 192-226 (PCSCQPRSRPRQSPAKSSQDHAMEAGSPVSTSPEP) are disordered.

Binds TRAF2, TRAF5 and TRAF6. Binds the NH2-terminal domain of CAMLG with its C-terminus. As to expression, highly expressed in spleen, thymus, small intestine and peripheral blood leukocytes. Expressed in resting B-cells and activated T-cells, but not in resting T-cells.

The protein resides in the membrane. Functionally, receptor for TNFSF13/APRIL and TNFSF13B/TALL1/BAFF/BLYS that binds both ligands with similar high affinity. Mediates calcineurin-dependent activation of NF-AT, as well as activation of NF-kappa-B and AP-1. Involved in the stimulation of B- and T-cell function and the regulation of humoral immunity. The protein is Tumor necrosis factor receptor superfamily member 13B (TNFRSF13B) of Homo sapiens (Human).